The chain runs to 204 residues: LexA repressor (204 aa).

Residues 31–51 (VREICAKVGLSSTSTVHGHLS) constitute a DNA-binding region (H-T-H motif). Active-site for autocatalytic cleavage activity residues include Ser128 and Lys165.

Belongs to the peptidase S24 family. In terms of assembly, homodimer.

The enzyme catalyses Hydrolysis of Ala-|-Gly bond in repressor LexA.. Functionally, represses a number of genes involved in the response to DNA damage (SOS response), including recA and lexA. In the presence of single-stranded DNA, RecA interacts with LexA causing an autocatalytic cleavage which disrupts the DNA-binding part of LexA, leading to derepression of the SOS regulon and eventually DNA repair. The chain is LexA repressor from Clostridium acetobutylicum (strain ATCC 824 / DSM 792 / JCM 1419 / IAM 19013 / LMG 5710 / NBRC 13948 / NRRL B-527 / VKM B-1787 / 2291 / W).